We begin with the raw amino-acid sequence, 159 residues long: Ribosome maturation factor RimP (159 aa).

Belongs to the RimP family.

The protein resides in the cytoplasm. Required for maturation of 30S ribosomal subunits. The protein is Ribosome maturation factor RimP of Streptococcus pneumoniae serotype 19F (strain G54).